A 79-amino-acid polypeptide reads, in one-letter code: Cytochrome c-551 (79 aa).

Residues 1–14 (DGQSIYESGTSPTC) are compositionally biased toward polar residues. Residues 1-35 (DGQSIYESGTSPTCASCHDRGTAGAPKINEPGDWD) form a disordered region. Heme c contacts are provided by cysteine 14, cysteine 17, histidine 18, and methionine 55.

Binds 1 heme c group covalently per subunit.

This is Cytochrome c-551 from Halorhodospira halochloris (Ectothiorhodospira halochloris).